The following is a 244-amino-acid chain: 5-oxoprolinase subunit A (244 aa).

The protein belongs to the LamB/PxpA family. Forms a complex composed of PxpA, PxpB and PxpC.

It catalyses the reaction 5-oxo-L-proline + ATP + 2 H2O = L-glutamate + ADP + phosphate + H(+). In terms of biological role, catalyzes the cleavage of 5-oxoproline to form L-glutamate coupled to the hydrolysis of ATP to ADP and inorganic phosphate. The protein is 5-oxoprolinase subunit A of Escherichia coli O157:H7.